Reading from the N-terminus, the 159-residue chain is Insulin-like peptide 7 (159 aa).

The signal sequence occupies residues 1 to 31; sequence MTRMIIQNSGSWTLCGAVLLFVLPLIPTPEA. Intrachain disulfides connect Cys-63/Cys-136, Cys-75/Cys-150, and Cys-135/Cys-141. Residues 90-121 constitute a propeptide, connecting peptide; it reads TGNDEAWIKKTTTEPDGSTWLHVNYANMFLRS.

It belongs to the insulin family. As to quaternary structure, heterodimer of a B chain and an A chain linked by two disulfide bonds. In terms of tissue distribution, broadly expressed at a low level throughout the embryo, except the yolk. Expressed at a moderate level in the embryonic midgut. Larval expression is restricted to ten cells of the ventral nerve cord - in four pairs of centrally located cells in the most posterior abdominal segments and in one pair of dorsally located cells in the A1 or A2 segments.

The protein resides in the secreted. Its function is as follows. Possible ligand of InR/insulin-like receptor. This is Insulin-like peptide 7 from Drosophila melanogaster (Fruit fly).